The chain runs to 214 residues: Soluble inorganic pyrophosphatase (214 aa).

A disordered region spans residues Met1–Leu20. Substrate is bound by residues Lys64, Arg78, and Tyr90. Asp100, Asp105, and Asp137 together coordinate Mg(2+). Tyr174 is a binding site for substrate.

It belongs to the PPase family. Requires Mg(2+) as cofactor.

The protein localises to the cytoplasm. The catalysed reaction is diphosphate + H2O = 2 phosphate + H(+). The chain is Soluble inorganic pyrophosphatase (IPP) from Zea mays (Maize).